A 359-amino-acid polypeptide reads, in one-letter code: Holliday junction branch migration complex subunit RuvB (359 aa).

The interval 1–22 (MAIVSSNAEPSKGAPRPKPSRV) is disordered. Residues 13–204 (GAPRPKPSRV…FGLIQRLEFY (192 aa)) are large ATPase domain (RuvB-L). ATP contacts are provided by Leu43, Arg44, Gly85, Lys88, Thr89, Thr90, Arg194, Tyr204, and Arg241. Residue Thr89 coordinates Mg(2+). The small ATPAse domain (RuvB-S) stretch occupies residues 205–276 (GQEDLQAIVM…LVDEALTLHR (72 aa)). Residues 279–359 (GKGLDASDRR…GWPADEGDAA (81 aa)) are head domain (RuvB-H). Positions 334 and 339 each coordinate DNA.

It belongs to the RuvB family. Homohexamer. Forms an RuvA(8)-RuvB(12)-Holliday junction (HJ) complex. HJ DNA is sandwiched between 2 RuvA tetramers; dsDNA enters through RuvA and exits via RuvB. An RuvB hexamer assembles on each DNA strand where it exits the tetramer. Each RuvB hexamer is contacted by two RuvA subunits (via domain III) on 2 adjacent RuvB subunits; this complex drives branch migration. In the full resolvosome a probable DNA-RuvA(4)-RuvB(12)-RuvC(2) complex forms which resolves the HJ.

It localises to the cytoplasm. It catalyses the reaction ATP + H2O = ADP + phosphate + H(+). Functionally, the RuvA-RuvB-RuvC complex processes Holliday junction (HJ) DNA during genetic recombination and DNA repair, while the RuvA-RuvB complex plays an important role in the rescue of blocked DNA replication forks via replication fork reversal (RFR). RuvA specifically binds to HJ cruciform DNA, conferring on it an open structure. The RuvB hexamer acts as an ATP-dependent pump, pulling dsDNA into and through the RuvAB complex. RuvB forms 2 homohexamers on either side of HJ DNA bound by 1 or 2 RuvA tetramers; 4 subunits per hexamer contact DNA at a time. Coordinated motions by a converter formed by DNA-disengaged RuvB subunits stimulates ATP hydrolysis and nucleotide exchange. Immobilization of the converter enables RuvB to convert the ATP-contained energy into a lever motion, pulling 2 nucleotides of DNA out of the RuvA tetramer per ATP hydrolyzed, thus driving DNA branch migration. The RuvB motors rotate together with the DNA substrate, which together with the progressing nucleotide cycle form the mechanistic basis for DNA recombination by continuous HJ branch migration. Branch migration allows RuvC to scan DNA until it finds its consensus sequence, where it cleaves and resolves cruciform DNA. This Synechococcus sp. (strain CC9311) protein is Holliday junction branch migration complex subunit RuvB.